Here is a 148-residue protein sequence, read N- to C-terminus: SsrA-binding protein (148 aa).

The protein belongs to the SmpB family.

It is found in the cytoplasm. Required for rescue of stalled ribosomes mediated by trans-translation. Binds to transfer-messenger RNA (tmRNA), required for stable association of tmRNA with ribosomes. tmRNA and SmpB together mimic tRNA shape, replacing the anticodon stem-loop with SmpB. tmRNA is encoded by the ssrA gene; the 2 termini fold to resemble tRNA(Ala) and it encodes a 'tag peptide', a short internal open reading frame. During trans-translation Ala-aminoacylated tmRNA acts like a tRNA, entering the A-site of stalled ribosomes, displacing the stalled mRNA. The ribosome then switches to translate the ORF on the tmRNA; the nascent peptide is terminated with the 'tag peptide' encoded by the tmRNA and targeted for degradation. The ribosome is freed to recommence translation, which seems to be the essential function of trans-translation. The protein is SsrA-binding protein of Burkholderia ambifaria (strain ATCC BAA-244 / DSM 16087 / CCUG 44356 / LMG 19182 / AMMD) (Burkholderia cepacia (strain AMMD)).